A 577-amino-acid chain; its full sequence is Arginine--tRNA ligase (577 aa).

Positions 122–132 (PNVAKEMHVGH) match the 'HIGH' region motif.

It belongs to the class-I aminoacyl-tRNA synthetase family. As to quaternary structure, monomer.

It is found in the cytoplasm. The enzyme catalyses tRNA(Arg) + L-arginine + ATP = L-arginyl-tRNA(Arg) + AMP + diphosphate. In Salmonella schwarzengrund (strain CVM19633), this protein is Arginine--tRNA ligase.